The chain runs to 440 residues: NADH-quinone oxidoreductase subunit D (440 aa).

This sequence belongs to the complex I 49 kDa subunit family. As to quaternary structure, NDH-1 is composed of 14 different subunits. Subunits NuoB, C, D, E, F, and G constitute the peripheral sector of the complex.

It is found in the cell membrane. It catalyses the reaction a quinone + NADH + 5 H(+)(in) = a quinol + NAD(+) + 4 H(+)(out). NDH-1 shuttles electrons from NADH, via FMN and iron-sulfur (Fe-S) centers, to quinones in the respiratory chain. The immediate electron acceptor for the enzyme in this species is believed to be a menaquinone. Couples the redox reaction to proton translocation (for every two electrons transferred, four hydrogen ions are translocated across the cytoplasmic membrane), and thus conserves the redox energy in a proton gradient. This chain is NADH-quinone oxidoreductase subunit D, found in Mycobacterium bovis (strain ATCC BAA-935 / AF2122/97).